The sequence spans 154 residues: Calmodulin-like protein 6 (154 aa).

EF-hand domains are found at residues 1–36 (MDST…LGII), 37–72 (IPED…IMVE), 77–112 (VGEE…LGLK), and 115–150 (KTLE…GRFF). Positions 14, 16, 18, 20, 25, 50, 52, 54, 56, 61, 90, 92, 94, 101, 128, 130, 132, 134, and 139 each coordinate Ca(2+).

This sequence belongs to the calmodulin family.

Potential calcium sensor. In Arabidopsis thaliana (Mouse-ear cress), this protein is Calmodulin-like protein 6 (CML6).